The chain runs to 418 residues: MSLLAIGINHNTASVDLREKVAFGPDKLGPALEQLREHEAVNGSVIVSTCNRTEVYCDVKQGARNKLIDWLAQFHQVNQEDLMPSLYVHEEQAAIKHLMRVSCGLDSLVLGEPQILGQVKQAFSDSRDHQAVDTSIDKLFQKTFSVAKRVRTETDIGGNAVSVAYAACTLAKHIFESLSDSTVLLVGAGETIELVAKHLASNGCTKMIVANRTRERALGLGEQFGAEVISLNEIPDHLPRADIVISSTASPLPIIGKGMVETALKKRRHQPMLLVDIAVPRDVEAQVGELSDAYLYSVDDLQSIIDSNIEQRKVEAIQAEAIVSEESAAFMTWLRSLQAVDSIRDYRKSANEIREDLLSKSLQSLATGADPEKVLRELSNKLTNKLIHAPTRALQSAAEQGEPAKLTVIRQTLGLDDL.

Substrate is bound by residues 49-52 (TCNR), serine 107, 112-114 (EPQ), and glutamine 118. Residue cysteine 50 is the Nucleophile of the active site. 187–192 (GAGETI) provides a ligand contact to NADP(+).

It belongs to the glutamyl-tRNA reductase family. Homodimer.

It carries out the reaction (S)-4-amino-5-oxopentanoate + tRNA(Glu) + NADP(+) = L-glutamyl-tRNA(Glu) + NADPH + H(+). It participates in porphyrin-containing compound metabolism; protoporphyrin-IX biosynthesis; 5-aminolevulinate from L-glutamyl-tRNA(Glu): step 1/2. Its function is as follows. Catalyzes the NADPH-dependent reduction of glutamyl-tRNA(Glu) to glutamate 1-semialdehyde (GSA). This chain is Glutamyl-tRNA reductase, found in Vibrio campbellii (strain ATCC BAA-1116).